The chain runs to 447 residues: Maintenance of mitochondrial morphology protein 1 (447 aa).

Residues 1 to 109 are Lumenal-facing; the sequence is MKSPNETSFT…VFSAWSFAQG (109 aa). The chain crosses the membrane as a helical span at residues 110-130; sequence LVIGQLSVIVVLIFFIKFFIF. Residues 131 to 447 are Cytoplasmic-facing; it reads SEGPIKTEGP…DDISMKSTDL (317 aa). Residues 208 to 421 form the SMP-LTD domain; sequence SPETLDWFNV…EPRFQFIKLP (214 aa).

Belongs to the MMM1 family. As to quaternary structure, homodimer. Component of the ER-mitochondria encounter structure (ERMES) or MDM complex, composed of MMM1, MDM10, MDM12 and MDM34. An MMM1 homodimer associates with one molecule of MDM12 on each side in a pairwise head-to-tail manner, and the SMP-LTD domains of MMM1 and MDM12 generate a continuous hydrophobic tunnel for phospholipid trafficking.

The protein resides in the endoplasmic reticulum membrane. In terms of biological role, component of the ERMES/MDM complex, which serves as a molecular tether to connect the endoplasmic reticulum (ER) and mitochondria. Components of this complex are involved in the control of mitochondrial shape and protein biogenesis, and function in nonvesicular lipid trafficking between the ER and mitochondria. The MDM12-MMM1 subcomplex functions in the major beta-barrel assembly pathway that is responsible for biogenesis of all outer membrane beta-barrel proteins, and acts in a late step after the SAM complex. The MDM10-MDM12-MMM1 subcomplex further acts in the TOM40-specific pathway after the action of the MDM12-MMM1 complex. Essential for establishing and maintaining the structure of mitochondria and maintenance of mtDNA nucleoids. The polypeptide is Maintenance of mitochondrial morphology protein 1 (Lachancea thermotolerans (strain ATCC 56472 / CBS 6340 / NRRL Y-8284) (Yeast)).